The primary structure comprises 395 residues: Major capsid protein P3 (395 aa).

As to quaternary structure, homotrimer.

It localises to the virion. Major capsid protein self-assembles to form an icosahedral capsid with a pseudo T=25 symmetry, about 66 nm in diameter, and consisting of 240 capsid proteins trimers. The capsid encapsulates an inner membrane and the genomic dsDNA genome. The major coat protein P3 and two assembly factors (P10 and P17) are needed during the assembly of the virus particle inside the host cell, when the capsid protein multimers are capable of enclosing the host-derived membrane, containing the virus-encoded membrane-associated proteins. This Acinetobacter calcoaceticus (Arthrobacter siderocapsulatus) protein is Major capsid protein P3 (III).